The following is a 313-amino-acid chain: MDNVLVIIGPTASGKTKLAIEIAKRANGEIISADSMQIYKYMDIGTAKPDEEEKEGIKHYLIDEVTPDEEFSVARFKELALKYIDEILSKGKLPIVAGGTGLYINSLIYNLEFSDTICDWELRKKLEQEAKEKGNEYLHNKLKEIDPKAAEKIHMNNVKRVIRAIEVYTYTKKPISVHQEESRKNPPRHNFILIGITMDREKLYDRINKRVDLMLEKGLVKEVEKLVEMGYDKSTIAMQGLGYKEILSYLRGERSLDEAVEILKRDTRRYAKRQMTWFRKIENVYWINKDEFDSDEKIIKNLKYYLATFGIFL.

Position 9 to 16 (9 to 16) interacts with ATP; the sequence is GPTASGKT. Residue 11–16 participates in substrate binding; that stretch reads TASGKT. The interaction with substrate tRNA stretch occupies residues 34 to 37; the sequence is DSMQ.

The protein belongs to the IPP transferase family. In terms of assembly, monomer. It depends on Mg(2+) as a cofactor.

The enzyme catalyses adenosine(37) in tRNA + dimethylallyl diphosphate = N(6)-dimethylallyladenosine(37) in tRNA + diphosphate. Functionally, catalyzes the transfer of a dimethylallyl group onto the adenine at position 37 in tRNAs that read codons beginning with uridine, leading to the formation of N6-(dimethylallyl)adenosine (i(6)A). The protein is tRNA dimethylallyltransferase of Acetivibrio thermocellus (strain ATCC 27405 / DSM 1237 / JCM 9322 / NBRC 103400 / NCIMB 10682 / NRRL B-4536 / VPI 7372) (Clostridium thermocellum).